A 429-amino-acid polypeptide reads, in one-letter code: Asparagine--tRNA ligase (429 aa).

It belongs to the class-II aminoacyl-tRNA synthetase family. As to quaternary structure, homodimer.

It localises to the cytoplasm. It carries out the reaction tRNA(Asn) + L-asparagine + ATP = L-asparaginyl-tRNA(Asn) + AMP + diphosphate + H(+). The sequence is that of Asparagine--tRNA ligase from Desulforamulus reducens (strain ATCC BAA-1160 / DSM 100696 / MI-1) (Desulfotomaculum reducens).